The primary structure comprises 297 residues: 4-hydroxy-tetrahydrodipicolinate synthase (297 aa).

Thr50 contacts pyruvate. The active-site Proton donor/acceptor is Tyr138. Lys166 (schiff-base intermediate with substrate) is an active-site residue. Ile208 serves as a coordination point for pyruvate.

Belongs to the DapA family. Homotetramer; dimer of dimers.

It localises to the cytoplasm. The enzyme catalyses L-aspartate 4-semialdehyde + pyruvate = (2S,4S)-4-hydroxy-2,3,4,5-tetrahydrodipicolinate + H2O + H(+). It functions in the pathway amino-acid biosynthesis; L-lysine biosynthesis via DAP pathway; (S)-tetrahydrodipicolinate from L-aspartate: step 3/4. Its function is as follows. Catalyzes the condensation of (S)-aspartate-beta-semialdehyde [(S)-ASA] and pyruvate to 4-hydroxy-tetrahydrodipicolinate (HTPA). This chain is 4-hydroxy-tetrahydrodipicolinate synthase, found in Desulfotalea psychrophila (strain LSv54 / DSM 12343).